The following is a 109-amino-acid chain: Flagellar hook-basal body complex protein FliE (109 aa).

The protein belongs to the FliE family.

Its subcellular location is the bacterial flagellum basal body. The polypeptide is Flagellar hook-basal body complex protein FliE (Nitrosomonas eutropha (strain DSM 101675 / C91 / Nm57)).